The primary structure comprises 460 residues: Bifunctional protein GlmU (460 aa).

The interval 1 to 229 is pyrophosphorylase; the sequence is MTNYAIILAA…FNESLGVNDR (229 aa). UDP-N-acetyl-alpha-D-glucosamine contacts are provided by residues 8 to 11, Lys-22, Gln-72, and 77 to 78; these read LAAG and GT. Asp-102 lines the Mg(2+) pocket. UDP-N-acetyl-alpha-D-glucosamine is bound by residues Gly-139, Glu-154, Asn-169, and Asn-227. Asn-227 contributes to the Mg(2+) binding site. Positions 230 to 250 are linker; sequence VALATAETVMRQRITQKHMVN. Residues 251–460 form an N-acetyltransferase region; it reads GVTFQNPETV…RLAHHPSRSK (210 aa). UDP-N-acetyl-alpha-D-glucosamine contacts are provided by Arg-332 and Lys-350. The Proton acceptor role is filled by His-362. UDP-N-acetyl-alpha-D-glucosamine contacts are provided by Tyr-365 and Asn-376. Acetyl-CoA is bound by residues Ala-379, 385-386, Ser-404, Ala-422, and Arg-439; that span reads NY.

This sequence in the N-terminal section; belongs to the N-acetylglucosamine-1-phosphate uridyltransferase family. It in the C-terminal section; belongs to the transferase hexapeptide repeat family. Homotrimer. Mg(2+) serves as cofactor.

The protein localises to the cytoplasm. The enzyme catalyses alpha-D-glucosamine 1-phosphate + acetyl-CoA = N-acetyl-alpha-D-glucosamine 1-phosphate + CoA + H(+). The catalysed reaction is N-acetyl-alpha-D-glucosamine 1-phosphate + UTP + H(+) = UDP-N-acetyl-alpha-D-glucosamine + diphosphate. It participates in nucleotide-sugar biosynthesis; UDP-N-acetyl-alpha-D-glucosamine biosynthesis; N-acetyl-alpha-D-glucosamine 1-phosphate from alpha-D-glucosamine 6-phosphate (route II): step 2/2. It functions in the pathway nucleotide-sugar biosynthesis; UDP-N-acetyl-alpha-D-glucosamine biosynthesis; UDP-N-acetyl-alpha-D-glucosamine from N-acetyl-alpha-D-glucosamine 1-phosphate: step 1/1. Its pathway is bacterial outer membrane biogenesis; LPS lipid A biosynthesis. Catalyzes the last two sequential reactions in the de novo biosynthetic pathway for UDP-N-acetylglucosamine (UDP-GlcNAc). The C-terminal domain catalyzes the transfer of acetyl group from acetyl coenzyme A to glucosamine-1-phosphate (GlcN-1-P) to produce N-acetylglucosamine-1-phosphate (GlcNAc-1-P), which is converted into UDP-GlcNAc by the transfer of uridine 5-monophosphate (from uridine 5-triphosphate), a reaction catalyzed by the N-terminal domain. This Streptococcus pyogenes serotype M28 (strain MGAS6180) protein is Bifunctional protein GlmU.